The primary structure comprises 467 residues: Cysteine--tRNA ligase (467 aa).

Position 29 (Cys-29) interacts with Zn(2+). Positions 31-41 match the 'HIGH' region motif; it reads PTVYNYVHIGN. 3 residues coordinate Zn(2+): Cys-209, His-234, and Glu-238. Positions 267-271 match the 'KMSKS' region motif; the sequence is KMSKS. Lys-270 contributes to the ATP binding site.

Belongs to the class-I aminoacyl-tRNA synthetase family. As to quaternary structure, monomer. The cofactor is Zn(2+).

The protein resides in the cytoplasm. It carries out the reaction tRNA(Cys) + L-cysteine + ATP = L-cysteinyl-tRNA(Cys) + AMP + diphosphate. The protein is Cysteine--tRNA ligase of Xylella fastidiosa (strain 9a5c).